The primary structure comprises 161 residues: Putative acetyltransferase SAR0816 (161 aa).

It belongs to the transferase hexapeptide repeat family.

The chain is Putative acetyltransferase SAR0816 from Staphylococcus aureus (strain MRSA252).